We begin with the raw amino-acid sequence, 272 residues long: uncharacterized protein (272 aa).

Its subcellular location is the periplasm. May be involved in ulvan degradation. Ulvan is the main polysaccharide component of the Ulvales (green seaweed) cell wall. It is composed of disaccharide building blocks comprising 3-sulfated rhamnose (Rha3S) linked to D-glucuronic acid (GlcA), L-iduronic acid (IduA), or D-xylose (Xyl). This is an uncharacterized protein from Formosa agariphila (strain DSM 15362 / KCTC 12365 / LMG 23005 / KMM 3901 / M-2Alg 35-1).